Here is a 256-residue protein sequence, read N- to C-terminus: Imidazole glycerol phosphate synthase subunit HisF (256 aa).

Catalysis depends on residues aspartate 11 and aspartate 130.

It belongs to the HisA/HisF family. In terms of assembly, heterodimer of HisH and HisF.

The protein resides in the cytoplasm. It carries out the reaction 5-[(5-phospho-1-deoxy-D-ribulos-1-ylimino)methylamino]-1-(5-phospho-beta-D-ribosyl)imidazole-4-carboxamide + L-glutamine = D-erythro-1-(imidazol-4-yl)glycerol 3-phosphate + 5-amino-1-(5-phospho-beta-D-ribosyl)imidazole-4-carboxamide + L-glutamate + H(+). It participates in amino-acid biosynthesis; L-histidine biosynthesis; L-histidine from 5-phospho-alpha-D-ribose 1-diphosphate: step 5/9. Its function is as follows. IGPS catalyzes the conversion of PRFAR and glutamine to IGP, AICAR and glutamate. The HisF subunit catalyzes the cyclization activity that produces IGP and AICAR from PRFAR using the ammonia provided by the HisH subunit. The chain is Imidazole glycerol phosphate synthase subunit HisF from Cupriavidus metallidurans (strain ATCC 43123 / DSM 2839 / NBRC 102507 / CH34) (Ralstonia metallidurans).